The sequence spans 338 residues: UDP-glucose 4-epimerase (338 aa).

NAD(+) contacts are provided by residues 11–12, 31–36, 58–59, 80–84, N99, S124, Y149, K153, and F178; these read YI, DNLCNS, DI, and FAGLK. 2 residues coordinate substrate: S124 and Y149. Y149 (proton acceptor) is an active-site residue. Substrate contacts are provided by residues N179, 199-200, 216-218, R231, 292-295, and Y299; these read NL, AIF, and REGD.

The protein belongs to the NAD(P)-dependent epimerase/dehydratase family. In terms of assembly, homodimer. It depends on NAD(+) as a cofactor.

It carries out the reaction UDP-alpha-D-glucose = UDP-alpha-D-galactose. Its pathway is carbohydrate metabolism; galactose metabolism. Involved in the metabolism of galactose. Catalyzes the conversion of UDP-galactose (UDP-Gal) to UDP-glucose (UDP-Glc) through a mechanism involving the transient reduction of NAD. This chain is UDP-glucose 4-epimerase (galE), found in Yersinia pestis.